Here is a 171-residue protein sequence, read N- to C-terminus: CASP-like protein 1C3 (171 aa).

Over 1-6 the chain is Cytoplasmic; the sequence is MVKPKR. Residues 7 to 27 traverse the membrane as a helical segment; sequence LLSLLLRLIAFGATLAAVIIM. Residues 28–52 are Extracellular-facing; it reads ATSHEKGSFFALSYEAKYSDTPAFK. The helical transmembrane segment at 53–73 threads the bilayer; the sequence is YFVIANAIVTVYGFLALFIPS. The Cytoplasmic segment spans residues 74 to 79; it reads ESPLWR. Residues 80-100 traverse the membrane as a helical segment; sequence LVLALDLVFTMLLISSISAAL. The Extracellular segment spans residues 101–130; the sequence is AVAQVGKKGNSSAGWLPVCGQVTKYCNQVT. Asn-110 carries an N-linked (GlcNAc...) asparagine glycan. Residues 131–151 form a helical membrane-spanning segment; it reads GALVAGFIAIITYIILLLYSI. Residues 152–171 lie on the Cytoplasmic side of the membrane; sequence YTFLNSLLGKTPCRLSSPGI.

The protein belongs to the Casparian strip membrane proteins (CASP) family. In terms of assembly, homodimer and heterodimers.

The protein localises to the cell membrane. The sequence is that of CASP-like protein 1C3 from Populus trichocarpa (Western balsam poplar).